The following is a 366-amino-acid chain: Beta sliding clamp (366 aa).

It belongs to the beta sliding clamp family. In terms of assembly, forms a ring-shaped head-to-tail homodimer around DNA which binds and tethers DNA polymerases and other proteins to the DNA. The DNA replisome complex has a single clamp-loading complex (3 tau and 1 each of delta, delta', psi and chi subunits) which binds 3 Pol III cores (1 core on the leading strand and 2 on the lagging strand) each with a beta sliding clamp dimer. Additional proteins in the replisome are other copies of gamma, psi and chi, Ssb, DNA helicase and RNA primase.

It is found in the cytoplasm. Confers DNA tethering and processivity to DNA polymerases and other proteins. Acts as a clamp, forming a ring around DNA (a reaction catalyzed by the clamp-loading complex) which diffuses in an ATP-independent manner freely and bidirectionally along dsDNA. Initially characterized for its ability to contact the catalytic subunit of DNA polymerase III (Pol III), a complex, multichain enzyme responsible for most of the replicative synthesis in bacteria; Pol III exhibits 3'-5' exonuclease proofreading activity. The beta chain is required for initiation of replication as well as for processivity of DNA replication. The sequence is that of Beta sliding clamp (dnaN) from Vibrio cholerae serotype O1 (strain ATCC 39315 / El Tor Inaba N16961).